Consider the following 173-residue polypeptide: Ribosome maturation factor RimM (173 aa).

One can recognise a PRC barrel domain in the interval 98–170 (VGDMTWDSFI…SLTVSLPEGL (73 aa)).

Belongs to the RimM family. As to quaternary structure, binds ribosomal protein uS19.

Its subcellular location is the cytoplasm. Functionally, an accessory protein needed during the final step in the assembly of 30S ribosomal subunit, possibly for assembly of the head region. Essential for efficient processing of 16S rRNA. May be needed both before and after RbfA during the maturation of 16S rRNA. It has affinity for free ribosomal 30S subunits but not for 70S ribosomes. The protein is Ribosome maturation factor RimM of Parabacteroides distasonis (strain ATCC 8503 / DSM 20701 / CIP 104284 / JCM 5825 / NCTC 11152).